The sequence spans 503 residues: 2-phosphoxylose phosphatase 1 (503 aa).

At 1 to 6 the chain is on the cytoplasmic side; the sequence is MLARSR. Residues 7-27 traverse the membrane as a helical; Signal-anchor for type II membrane protein segment; the sequence is FILVLVVGALLAVLSFSLQYL. At 28-503 the chain is on the lumenal side; it reads HLIPTNPVAE…YQQACHQTVL (476 aa). The disordered stretch occupies residues 38 to 63; the sequence is QRSAGRSRKRVNPVLHTDPPAPDPIR. Residue asparagine 73 is glycosylated (N-linked (GlcNAc...) asparagine). Residue histidine 98 is the Nucleophile of the active site. N-linked (GlcNAc...) asparagine glycosylation is present at asparagine 365. The active-site Proton donor is the aspartate 396. Asparagine 490 carries N-linked (GlcNAc...) asparagine glycosylation.

It belongs to the histidine acid phosphatase family.

It localises to the golgi apparatus membrane. It carries out the reaction 3-O-[beta-D-GlcA-(1-&gt;3)-beta-D-Gal-(1-&gt;3)-beta-D-Gal-(1-&gt;4)-beta-D-2-O-P-Xyl]-L-seryl-[protein] + H2O = 3-O-(beta-D-GlcA-(1-&gt;3)-beta-D-Gal-(1-&gt;3)-beta-D-Gal-(1-&gt;4)-beta-D-Xyl)-L-seryl-[protein] + phosphate. Its function is as follows. Responsible for the 2-O-dephosphorylation of xylose in the glycosaminoglycan-protein linkage region of proteoglycans thereby regulating the amount of mature glycosaminoglycan (GAG) chains. Sulfated glycosaminoglycans (GAGs), including heparan sulfate and chondroitin sulfate, are synthesized on the so-called common GAG-protein linkage region (GlcUAbeta1-3Galbeta1-3Galbeta1-4Xylbeta1-O-Ser) of core proteins, which is formed by the stepwise addition of monosaccharide residues by the respective specific glycosyltransferases. The sequence is that of 2-phosphoxylose phosphatase 1 from Danio rerio (Zebrafish).